The sequence spans 421 residues: NADP(+)-dependent glutamate dehydrogenase (421 aa).

The substrate site is built by lysine 70 and lysine 94. Catalysis depends on lysine 106, which acts as the Proton donor. NADP(+)-binding residues include threonine 190 and asparagine 221. Serine 354 contacts substrate.

It belongs to the Glu/Leu/Phe/Val dehydrogenases family. Homohexamer.

The catalysed reaction is L-glutamate + NADP(+) + H2O = 2-oxoglutarate + NH4(+) + NADPH + H(+). Is not regulated allosterically. Activity is inhibited in the presence of high ionic strength; the inhibitory effect of KCl is slightly higher than that of NaCl. Functionally, catalyzes the reversible oxidative deamination of L-glutamate to 2-oxoglutarate and ammonia, thereby playing a key role at the intersection of the carbon and nitrogen metabolic pathways. Shows a high preference for NADP(+)/NADPH as the acceptor/donor over NAD(+)/NADH. May function in vivo in the synthetic direction. Also catalyzes at very low rates the oxidative deamination of L-2-aminobutyrate, and the reductive amination of 2-oxovalerate and 2-oxobutyrate. The polypeptide is NADP(+)-dependent glutamate dehydrogenase (Pyrobaculum calidifontis (strain DSM 21063 / JCM 11548 / VA1)).